The following is a 582-amino-acid chain: MVTERSARESPEQRAAEQVVLVVDDDEDLADTCRYWLDGERFAVETAYGGEEALHRLDDTVDVVLLDRRMPNVTGDDVLEEIRERGLDCRVAMMTAVEPDTDIVEMPFDAYLVKPVSESEVKETVEELLVRSGFESGVREYFALESTEAALDSRDVEELREPEALSDLRSRLEAVRAEHEAAIRNREAQLDRLNRTNELLRDVDRALIDARTRDEIEQTVCDVVADAHEAAVVLRRTAAGTLRCTAAAGHGLDPAGVDLDFVDEAFGVDGAAEDGFVFEDIPGAHRAAVLGDDADDLDAVSALCVSIDYRETMYGALVVYDETDGFDDESAGLFSDLGATVGNGINATQSKRLLNGDSVVELEFQVGRDAGVLARLSAALDCQLSLDGVTRLDDGLACFISVAGASGCDAVAAAIDAVDVSQARVVADGDEESVVELRTDAEAVLSTAIDHGASVERLTLSEGSGTLTLHVAADADHGALVEAVTTAAAGVSVVAKREVERSVQSADSFRRALDSKLTDRQRTVLETSLVSGYFEWPRGSTAEEVADSLGISPPTLHEHLRTAERKLIETYFDELNQAPADD.

The region spanning 19-129 is the Response regulatory domain; it reads VVLVVDDDED…EVKETVEELL (111 aa). D67 is subject to 4-aspartylphosphate. A coiled-coil region spans residues 165 to 203; it reads LSDLRSRLEAVRAEHEAAIRNREAQLDRLNRTNELLRDV. The 53-residue stretch at 517-569 folds into the HTH bat-type domain; it reads LTDRQRTVLETSLVSGYFEWPRGSTAEEVADSLGISPPTLHEHLRTAERKLIE.

Its function is as follows. May be part of a signal-dependent gene regulation cascade that is relevant to swimming motility. May be involved in the transcription regulation of target genes. The polypeptide is Putative transcriptional regulator HVO_1357 (Haloferax volcanii (strain ATCC 29605 / DSM 3757 / JCM 8879 / NBRC 14742 / NCIMB 2012 / VKM B-1768 / DS2) (Halobacterium volcanii)).